The sequence spans 159 residues: MNPRRKTRLWVALTVLAGLGLTMALVLYALRANIDLFYTPGEILYGKGAAQEKPEPGQRLRVGGMVMPGSVKRDSRSLKVSFRLYDARGVVDVDYDGILPDLFREGQGVVAQGVLGDDQRIHAREVLAKHDENYTPPEVKAAMDANHTRPPQAYKDNRP.

At 1–8 the chain is on the cytoplasmic side; sequence MNPRRKTR. Residues 9–29 form a helical; Signal-anchor for type II membrane protein membrane-spanning segment; that stretch reads LWVALTVLAGLGLTMALVLYA. Over 30-159 the chain is Periplasmic; sequence LRANIDLFYT…PPQAYKDNRP (130 aa). Positions 130 and 134 each coordinate heme. Residues 130-159 form a disordered region; it reads HDENYTPPEVKAAMDANHTRPPQAYKDNRP.

The protein belongs to the CcmE/CycJ family.

It is found in the cell inner membrane. Functionally, heme chaperone required for the biogenesis of c-type cytochromes. Transiently binds heme delivered by CcmC and transfers the heme to apo-cytochromes in a process facilitated by CcmF and CcmH. This is Cytochrome c-type biogenesis protein CcmE from Cronobacter sakazakii (strain ATCC BAA-894) (Enterobacter sakazakii).